The chain runs to 138 residues: Ribonuclease kappa-A (138 aa).

Residues 1–24 (MVLYFSPVLTFFLANFFNSKSTTT) form the signal peptide. Residues 25–75 (ENLQVFLVENQHRDSKRKINPTFSKKGIEVRQQNENLWSKIVALRFDYSVW) lie on the Extracellular side of the membrane. A helical transmembrane segment spans residues 76-96 (GIIQLVLMMGLFFYINSVALI). Over 97–138 (EDLPIDEEFNSVEEFYTAATSAYNQNAYTVGLPVHLCAYASI) the chain is Cytoplasmic.

The protein belongs to the RNase K family.

Its subcellular location is the membrane. Functionally, endoribonuclease. In Ceratitis capitata (Mediterranean fruit fly), this protein is Ribonuclease kappa-A.